The chain runs to 125 residues: Small ribosomal subunit protein uS13 (125 aa).

This sequence belongs to the universal ribosomal protein uS13 family. In terms of assembly, part of the 30S ribosomal subunit. Forms a loose heterodimer with protein S19. Forms two bridges to the 50S subunit in the 70S ribosome.

Functionally, located at the top of the head of the 30S subunit, it contacts several helices of the 16S rRNA. In the 70S ribosome it contacts the 23S rRNA (bridge B1a) and protein L5 of the 50S subunit (bridge B1b), connecting the 2 subunits; these bridges are implicated in subunit movement. Contacts the tRNAs in the A and P-sites. This Granulibacter bethesdensis (strain ATCC BAA-1260 / CGDNIH1) protein is Small ribosomal subunit protein uS13.